Reading from the N-terminus, the 245-residue chain is MYPVDLHMHTVASTHAYSTLHDYIAEAQQKNIRLFAITDHGPDMADAPHYWHFMNMRVWPRLVDGVGILRGIEANIKNIEGDIDCTGPMLDQVDVIIAGFHEPVFPPQDKDTHTAAMIATMARGDAHIISHPGNPKYPVDIRAIAEAAAKYNVALELNNSSFMHSRKGSEPNCRAIAEAVRDAGGLLSLGSDSHIAFSLGDFTHCERILQEVNFPQDQILNVSPRRVLDFLEQRGMPAIAELANL.

9 residues coordinate Zn(2+): His-7, His-9, His-15, His-40, Glu-73, His-101, His-131, Asp-192, and His-194.

It belongs to the PHP family. As to quaternary structure, homotrimer. The cofactor is Zn(2+).

The protein is Probable phosphatase PC1_1798 of Pectobacterium carotovorum subsp. carotovorum (strain PC1).